We begin with the raw amino-acid sequence, 178 residues long: Large ribosomal subunit protein uL6 (178 aa).

The protein belongs to the universal ribosomal protein uL6 family. As to quaternary structure, part of the 50S ribosomal subunit.

In terms of biological role, this protein binds to the 23S rRNA, and is important in its secondary structure. It is located near the subunit interface in the base of the L7/L12 stalk, and near the tRNA binding site of the peptidyltransferase center. The protein is Large ribosomal subunit protein uL6 of Natranaerobius thermophilus (strain ATCC BAA-1301 / DSM 18059 / JW/NM-WN-LF).